The sequence spans 230 residues: Phosphatidylserine decarboxylase proenzyme (230 aa).

Catalysis depends on S186, which acts as the Schiff-base intermediate with substrate; via pyruvic acid. At S186 the chain carries Pyruvic acid (Ser); by autocatalysis.

It belongs to the phosphatidylserine decarboxylase family. PSD-A subfamily. Heterodimer of a large membrane-associated beta subunit and a small pyruvoyl-containing alpha subunit. Pyruvate is required as a cofactor. Post-translationally, is synthesized initially as an inactive proenzyme. Formation of the active enzyme involves a self-maturation process in which the active site pyruvoyl group is generated from an internal serine residue via an autocatalytic post-translational modification. Two non-identical subunits are generated from the proenzyme in this reaction, and the pyruvate is formed at the N-terminus of the alpha chain, which is derived from the carboxyl end of the proenzyme. The post-translation cleavage follows an unusual pathway, termed non-hydrolytic serinolysis, in which the side chain hydroxyl group of the serine supplies its oxygen atom to form the C-terminus of the beta chain, while the remainder of the serine residue undergoes an oxidative deamination to produce ammonia and the pyruvoyl prosthetic group on the alpha chain.

It localises to the cell membrane. The enzyme catalyses a 1,2-diacyl-sn-glycero-3-phospho-L-serine + H(+) = a 1,2-diacyl-sn-glycero-3-phosphoethanolamine + CO2. Its pathway is phospholipid metabolism; phosphatidylethanolamine biosynthesis; phosphatidylethanolamine from CDP-diacylglycerol: step 2/2. In terms of biological role, catalyzes the formation of phosphatidylethanolamine (PtdEtn) from phosphatidylserine (PtdSer). This chain is Phosphatidylserine decarboxylase proenzyme, found in Wolbachia pipientis wMel.